The following is a 360-amino-acid chain: Phospho-N-acetylmuramoyl-pentapeptide-transferase (360 aa).

10 helical membrane passes run 26–46 (AIMS…RLIA), 70–90 (GTPT…ALLW), 94–114 (SNPY…VGFV), 132–152 (WKYF…YMHG), 168–188 (VMPQ…VGTS), 199–219 (GLAI…AWAT), 239–259 (LVVL…FNTY), 263–283 (VFMG…IAVL), 288–308 (LLLV…ILQV), and 338–358 (VIVR…ATLK).

This sequence belongs to the glycosyltransferase 4 family. MraY subfamily. Mg(2+) serves as cofactor.

The protein resides in the cell inner membrane. It catalyses the reaction UDP-N-acetyl-alpha-D-muramoyl-L-alanyl-gamma-D-glutamyl-meso-2,6-diaminopimeloyl-D-alanyl-D-alanine + di-trans,octa-cis-undecaprenyl phosphate = di-trans,octa-cis-undecaprenyl diphospho-N-acetyl-alpha-D-muramoyl-L-alanyl-D-glutamyl-meso-2,6-diaminopimeloyl-D-alanyl-D-alanine + UMP. It functions in the pathway cell wall biogenesis; peptidoglycan biosynthesis. In terms of biological role, catalyzes the initial step of the lipid cycle reactions in the biosynthesis of the cell wall peptidoglycan: transfers peptidoglycan precursor phospho-MurNAc-pentapeptide from UDP-MurNAc-pentapeptide onto the lipid carrier undecaprenyl phosphate, yielding undecaprenyl-pyrophosphoryl-MurNAc-pentapeptide, known as lipid I. The chain is Phospho-N-acetylmuramoyl-pentapeptide-transferase from Photobacterium profundum (strain SS9).